A 254-amino-acid chain; its full sequence is tRNA (guanine-N(1)-)-methyltransferase (254 aa).

S-adenosyl-L-methionine is bound by residues Gly113 and Ile133–Leu138.

The protein belongs to the RNA methyltransferase TrmD family. Homodimer.

The protein localises to the cytoplasm. It catalyses the reaction guanosine(37) in tRNA + S-adenosyl-L-methionine = N(1)-methylguanosine(37) in tRNA + S-adenosyl-L-homocysteine + H(+). Functionally, specifically methylates guanosine-37 in various tRNAs. This chain is tRNA (guanine-N(1)-)-methyltransferase, found in Edwardsiella ictaluri (strain 93-146).